Here is a 319-residue protein sequence, read N- to C-terminus: Annexin A4 (319 aa).

Residue A2 is modified to N-acetylalanine. T7 is subject to Phosphothreonine; by PKC. The residue at position 12 (S12) is a Phosphoserine. Annexin repeat units follow at residues 14–85 (FNAA…GMMT), 86–157 (PTVL…SLSA), 169–241 (ALVR…AIVK), and 245–316 (NKSA…ILCG). 3 positions are modified to N6-acetyllysine: K213, K293, and K300.

This sequence belongs to the annexin family. Monomer.

The protein resides in the zymogen granule membrane. Its function is as follows. Calcium/phospholipid-binding protein which promotes membrane fusion and is involved in exocytosis. This chain is Annexin A4 (ANXA4), found in Sus scrofa (Pig).